The chain runs to 327 residues: Ribonucleoside-diphosphate reductase small chain (327 aa).

The Fe cation site is built by Asp-70, Glu-101, and His-104. The active site involves Tyr-108. Fe cation contacts are provided by Glu-164, Glu-198, and His-201.

It belongs to the ribonucleoside diphosphate reductase small chain family. As to quaternary structure, heterotetramer composed of a homodimer of the large subunit (R1) and a homodimer of the small subunit (R2). Larger multisubunit protein complex are also active, composed of (R1)n(R2)n. Requires Fe cation as cofactor.

The enzyme catalyses a 2'-deoxyribonucleoside 5'-diphosphate + [thioredoxin]-disulfide + H2O = a ribonucleoside 5'-diphosphate + [thioredoxin]-dithiol. Ribonucleoside-diphosphate reductase holoenzyme provides the precursors necessary for viral DNA synthesis. Allows virus growth in non-dividing cells. Catalyzes the biosynthesis of deoxyribonucleotides from the corresponding ribonucleotides. The sequence is that of Ribonucleoside-diphosphate reductase small chain from African swine fever virus (isolate Tick/South Africa/Pretoriuskop Pr4/1996) (ASFV).